Reading from the N-terminus, the 425-residue chain is MLDLKRIRTDFDTVAAKLKNRGVSEDTLTHLKELDEKRRTLLVQSEELKAERNIASAAIAQAKRQKEGATQQIADMQKVSADIKTIDNQLVAIDQQVADIITVLPNTPHDSVPVGADEEDNVEIRRWGTPRDFDFEVKAHWNLGEDLDILDWERGAKVTGARFLFYKNLGARLERALYNFMLDEHIKEGYQEIITPYMVNHDSMFGTGQYPKFKEDTFELADTNFVLIPTAEVPLTNYYRGEILDGKELPIYFTAMSPSFRSEAGSAGRDTRGLIRLHQFHKVEMVKFAKPEESYQELEKMTANAENILQKLGLPYRVISLCTGDMGFSAAKTYDLEVWIPAQNTYREISSCSNTEDFQARRAQIRYRDEADGKVKLLHTLNGSGLAVGRTVAAILENYQNEDGSVTIPEVLRPYMGGETVISPK.

230 to 232 (TAE) lines the L-serine pocket. Position 261–263 (261–263 (RSE)) interacts with ATP. L-serine is bound at residue E284. 348–351 (EISS) provides a ligand contact to ATP. S384 provides a ligand contact to L-serine.

It belongs to the class-II aminoacyl-tRNA synthetase family. Type-1 seryl-tRNA synthetase subfamily. As to quaternary structure, homodimer. The tRNA molecule binds across the dimer.

The protein resides in the cytoplasm. The catalysed reaction is tRNA(Ser) + L-serine + ATP = L-seryl-tRNA(Ser) + AMP + diphosphate + H(+). It catalyses the reaction tRNA(Sec) + L-serine + ATP = L-seryl-tRNA(Sec) + AMP + diphosphate + H(+). The protein operates within aminoacyl-tRNA biosynthesis; selenocysteinyl-tRNA(Sec) biosynthesis; L-seryl-tRNA(Sec) from L-serine and tRNA(Sec): step 1/1. Functionally, catalyzes the attachment of serine to tRNA(Ser). Is also able to aminoacylate tRNA(Sec) with serine, to form the misacylated tRNA L-seryl-tRNA(Sec), which will be further converted into selenocysteinyl-tRNA(Sec). The sequence is that of Serine--tRNA ligase from Streptococcus pyogenes serotype M2 (strain MGAS10270).